The sequence spans 345 residues: UbiA prenyltransferase domain-containing protein 1 (345 aa).

The next 8 helical transmembrane spans lie at 60–80 (LALRPWSFSASLIPVALGTAI), 90–110 (LLLFVVCAVAVLAVHGAGNLV), 141–161 (VRFGVFLYTLGCLCAACLYFI), 169–189 (LALIYFGGLSSSFLYTGGIGF), 213–233 (AVQVGYLAVTPLLYAVPLALS), 251–273 (QAGIVTLAILVGPMFSYMLYNLL), 285–305 (ATRYTISMALPLLTIPLAFSL), and 324–344 (LNLLVGLFYVFGIVLAPAGSL).

This sequence belongs to the UbiA prenyltransferase family.

It is found in the endoplasmic reticulum membrane. The protein resides in the golgi apparatus membrane. Its subcellular location is the mitochondrion membrane. The enzyme catalyses menadiol + (2E,6E,10E)-geranylgeranyl diphosphate = menaquinol-4 + diphosphate. It catalyses the reaction all-trans-decaprenyl diphosphate + 4-hydroxybenzoate = 4-hydroxy-3-(all-trans-decaprenyl)benzoate + diphosphate. It participates in quinol/quinone metabolism; menaquinone biosynthesis. It functions in the pathway cofactor biosynthesis; ubiquinone biosynthesis. Prenyltransferase that mediates the formation of menaquinone-4 (MK-4) and coenzyme Q10. MK-4 is a vitamin K2 isoform required for endothelial cell development. Mediates the conversion of phylloquinone (PK) into MK-4, probably by cleaving the side chain of phylloquinone (PK) to release 2-methyl-1,4-naphthoquinone (menadione; K3) and then prenylating it with geranylgeranyl pyrophosphate (GGPP) to form MK-4. Also plays a role in cardiovascular development independently of MK-4 biosynthesis, by acting as a coenzyme Q10 biosynthetic enzyme: coenzyme Q10, also named ubiquinone, plays an important antioxidant role in the cardiovascular system. Mediates biosynthesis of coenzyme Q10 in the Golgi membrane, leading to protect cardiovascular tissues from NOS3/eNOS-dependent oxidative stress. The sequence is that of UbiA prenyltransferase domain-containing protein 1 (ubiad1) from Xenopus tropicalis (Western clawed frog).